The chain runs to 679 residues: MISASRAAAARLVGTAASRSPAAARPQDGWNGLSHEAFRFVSRRDYASEAIKGAVVGIDLGTTNSCVAVMEGKQAKVLENAEGARTTPSVVAFTADGERLVGMPAKRQAVTNPNNTFYATKRLIGRRYDDPEVQKDTKNVPFKIVRASNGDAWVEAHGKLYSPSQIGAFVLMKMKETAENYLGHTAKNAVITVPAYFNDSQRQATKDAGQISGLNVLRVINEPTAAALAYGLDKSEDKVIAVYDLGGGTFDISILEIQKGVFEVKSTNGDTFLGGEDFDQALLRHIVKEFKRETGVDLTKDNMALQRVREAAEKAKCELSSSVQTDINLPYLTMDASGPKHLNMKLTRAQFEGIVTDLIKRTIAPCQKAMQDAEVSKSDIGEVILVGGMTRMPKVQQTVQDLFGRAPSKAVNPDEAVAIGAAIQGGVLAGDVTDVLLLDVTPLSLGIETLGGVFTKLINRNTTIPTKKSQVFSTAADGQTQVEIKVCQGEREMAGDNKLLGQFTLIGIPPAPRGVPQIEVTFDIDANGIVHVSAKDKGTGREQQIVIQSSGGLSKDDIENMVKNAEKYAEEDRRKKERVEAVNMAEGIIHDTETKMEEFKDQLPADECNKLKEEISKMRALLAGKDSETGENIRQAASSLQQASLKLFEMAYKKMASEREGSGSSGTGEQKEDQKEEKQ.

Residues 1 to 46 (MISASRAAAARLVGTAASRSPAAARPQDGWNGLSHEAFRFVSRRDY) constitute a mitochondrion transit peptide. Positions 1–432 (MISASRAAAA…IQGGVLAGDV (432 aa)) are interaction with NFS1. Positions 63 and 64 each coordinate ADP. A nucleotide-binding domain (NBD) region spans residues 63–431 (TNSCVAVMEG…AIQGGVLAGD (369 aa)). An N6-acetyllysine modification is found at Lys76. Phosphothreonine is present on Thr87. 2 positions are modified to N6-acetyllysine; alternate: Lys135 and Lys138. N6-succinyllysine; alternate is present on residues Lys135 and Lys138. Lys143 is subject to N6-acetyllysine. An N6-acetyllysine; alternate modification is found at Lys206. An N6-succinyllysine; alternate modification is found at Lys206. N6-malonyllysine; alternate is present on Lys206. Residues Lys234 and Lys288 each carry the N6-acetyllysine modification. The residue at position 300 (Lys300) is an N6-acetyllysine; alternate. The residue at position 300 (Lys300) is an N6-succinyllysine; alternate. ADP-binding residues include Glu313, Lys316, and Ser320. An N6-acetyllysine; alternate modification is found at Lys360. Lys360 bears the N6-succinyllysine; alternate mark. Lys368 carries the post-translational modification N6-succinyllysine. Residues Gly388 and Arg391 each coordinate ADP. Position 394 is an N6-succinyllysine (Lys394). Ser408 is modified (phosphoserine). The interval 432-441 (VTDVLLLDVT) is interdomain linker. The tract at residues 432-679 (VTDVLLLDVT…QKEDQKEEKQ (248 aa)) is interaction with FXN and ISCU. Residues 442 to 679 (PLSLGIETLG…QKEDQKEEKQ (238 aa)) form a substrate-binding domain (SBD) region. Position 513 is an omega-N-methylarginine (Arg513). Residues Lys567 and Lys600 each carry the N6-acetyllysine; alternate modification. Lys567 and Lys600 each carry N6-succinyllysine; alternate. Lys610 is modified (N6-succinyllysine). Residue Lys612 is modified to N6-acetyllysine. Lys646 is modified (N6-acetyllysine; alternate). N6-succinyllysine; alternate is present on Lys646. The tract at residues 656–679 (ASEREGSGSSGTGEQKEDQKEEKQ) is disordered. A compositionally biased stretch (basic and acidic residues) spans 669–679 (EQKEDQKEEKQ).

This sequence belongs to the heat shock protein 70 family. In terms of assembly, interacts strongly with the intermediate form of FXN and weakly with its mature form. Interacts with HSCB. Associates with the mitochondrial contact site and cristae organizing system (MICOS) complex, composed of at least MICOS10/MIC10, CHCHD3/MIC19, CHCHD6/MIC25, APOOL/MIC27, IMMT/MIC60, APOO/MIC23/MIC26 and QIL1/MIC13. This complex was also known under the names MINOS or MitOS complex. The MICOS complex associates with mitochondrial outer membrane proteins SAMM50, MTX1, MTX2 and DNAJC11, mitochondrial inner membrane protein TMEM11 and with HSPA9. Interacts with DNLZ, the interaction is required to prevent self-aggregation. Interacts with TESPA1. Interacts with PDPN. Interacts with NFU1, NFS1 and ISCU. Interacts with TP53; the interaction promotes TP53 degradation. Interacts (via SBD domain) with UBXN2A; the interaction with UBXN2A inhibits HSPA9/MOT-2 interaction with and degradation of TP53, thereby promotes TP53 translocation to the nucleus. Interacts with ITPR1 AND VDAC1; this interaction couples ITPR1 to VDAC1. Component of the TIM23 mitochondrial inner membrane pre-sequence translocase complex.

It localises to the mitochondrion. The protein localises to the nucleus. It is found in the nucleolus. The protein resides in the cytoplasm. Its subcellular location is the mitochondrion matrix. The enzyme catalyses ATP + H2O = ADP + phosphate + H(+). With respect to regulation, the chaperone activity is regulated by ATP-induced allosteric coupling of the nucleotide-binding (NBD) and substrate-binding (SBD) domains. ATP binding in the NBD leads to a conformational change in the NBD, which is transferred through the interdomain linker (IDL) to the substrate-binding domain (SBD). This elicits a reduced substrate affinity and a faster substrate exchange rate. Upon hydrolysis of ATP to ADP, the protein undergoes a conformational change that increases its affinity for substrate proteins. It cycles through repeated phases of ATP hydrolysis and nucleotide exchange, facilitating repeated cycles of substrate binding and release. Functions in collaboration with co-chaperones. Functions with the co-chaperone, DNLZ, to maintain solubility and regulate ATP hydrolysis. Nucleotide exchange factors, GRPEL1 and GRPEL2, accelerate nucleotide exchange. In terms of biological role, mitochondrial chaperone that plays a key role in mitochondrial protein import, folding, and assembly. Plays an essential role in the protein quality control system, the correct folding of proteins, the re-folding of misfolded proteins, and the targeting of proteins for subsequent degradation. These processes are achieved through cycles of ATP binding, ATP hydrolysis, and ADP release, mediated by co-chaperones. In mitochondria, it associates with the TIM (translocase of the inner membrane) protein complex to assist in the import and folding of mitochondrial proteins. Plays an important role in mitochondrial iron-sulfur cluster (ISC) biogenesis. Interacts with and stabilizes ISC cluster assembly proteins FXN, NFU1, NFS1 and ISCU. Regulates erythropoiesis via stabilization of ISC assembly. Regulates mitochondrial calcium-dependent apoptosis by coupling two calcium channels, ITPR1 and VDAC1, at the mitochondria-associated endoplasmic reticulum (ER) membrane to facilitate calcium transport from the ER lumen to the mitochondria intermembrane space, providing calcium for the downstream calcium channel MCU, which releases it into the mitochondrial matrix. Although primarily located in the mitochondria, it is also found in other cellular compartments. In the cytosol, it associates with proteins involved in signaling, apoptosis, or senescence. It may play a role in cell cycle regulation via its interaction with and promotion of degradation of TP53. May play a role in the control of cell proliferation and cellular aging. Protects against reactive oxygen species (ROS). Extracellular HSPA9 plays a cytoprotective role by preventing cell lysis following immune attack by the membrane attack complex by disrupting formation of the complex. This Mus musculus (Mouse) protein is Stress-70 protein, mitochondrial.